A 452-amino-acid polypeptide reads, in one-letter code: tRNA modification GTPase MnmE (452 aa).

R23, E80, and K119 together coordinate (6S)-5-formyl-5,6,7,8-tetrahydrofolate. One can recognise a TrmE-type G domain in the interval 215–374 (GIWIALVGQP…LQQGLLEMIG (160 aa)). Position 225 (N225) interacts with K(+). GTP contacts are provided by residues 225 to 230 (NVGKSS), 244 to 250 (TEVPGTT), and 269 to 272 (DTAG). S229 is a binding site for Mg(2+). K(+)-binding residues include T244, V246, and T249. T250 lines the Mg(2+) pocket. K452 contacts (6S)-5-formyl-5,6,7,8-tetrahydrofolate.

This sequence belongs to the TRAFAC class TrmE-Era-EngA-EngB-Septin-like GTPase superfamily. TrmE GTPase family. Homodimer. Heterotetramer of two MnmE and two MnmG subunits. K(+) serves as cofactor.

It localises to the cytoplasm. Exhibits a very high intrinsic GTPase hydrolysis rate. Involved in the addition of a carboxymethylaminomethyl (cmnm) group at the wobble position (U34) of certain tRNAs, forming tRNA-cmnm(5)s(2)U34. The sequence is that of tRNA modification GTPase MnmE from Nitrosospira multiformis (strain ATCC 25196 / NCIMB 11849 / C 71).